Consider the following 65-residue polypeptide: MPKIKTVRGAAKRFKKTAGGGFKRKHANLRHILTKKSTKRKRHLRPKGMISKGDLGLVVACLPYA.

This sequence belongs to the bacterial ribosomal protein bL35 family.

This Proteus mirabilis (strain HI4320) protein is Large ribosomal subunit protein bL35.